Consider the following 82-residue polypeptide: Protein Vpu (82 aa).

At 1-7 (MQPIPIV) the chain is on the extracellular side. The chain crosses the membrane as a helical span at residues 8 to 28 (AIVALVVAIIIAIVVWSIVII). The Cytoplasmic portion of the chain corresponds to 29–82 (EYRKILRQRKIDRLIDRLIERAEDSGNESEGEISALVEMGVEMGHHAPWDVDDL). 2 positions are modified to phosphoserine; by host CK2: S53 and S57.

It belongs to the HIV-1 VPU protein family. In terms of assembly, homopentamer. Interacts with host CD4 and BRTC; these interactions induce proteasomal degradation of CD4. Interacts (via transmembrane region) with host BST2 (via transmembrane region); this interaction leads to the degradation of host BST2. Interacts with host FBXW11. Interacts with host AP1M1; this interaction plays a role in the mistrafficking and subsequent degradation of host BST2. Interacts with host RANBP2; this interaction allows Vpu to down-regulate host BLM sumoylation. Post-translationally, phosphorylated by host CK2. This phosphorylation is necessary for interaction with human BTRC and degradation of CD4.

The protein resides in the host membrane. Ion channel activity is inhibited by hexamethylene amiloride in vitro. Functionally, enhances virion budding by targeting host CD4 and Tetherin/BST2 to proteasome degradation. Degradation of CD4 prevents any unwanted premature interactions between viral Env and its host receptor CD4 in the endoplasmic reticulum. Degradation of antiretroviral protein Tetherin/BST2 is important for virion budding, as BST2 tethers new viral particles to the host cell membrane. Mechanistically, Vpu bridges either CD4 or BST2 to BTRC, a substrate recognition subunit of the Skp1/Cullin/F-box protein E3 ubiquitin ligase, induces their ubiquitination and subsequent proteasomal degradation. The alteration of the E3 ligase specificity by Vpu seems to promote the degradation of host IKBKB, leading to NF-kappa-B down-regulation and subsequent apoptosis. Acts as a viroporin that forms an oligomeric ion channel in membranes. Modulates the host DNA repair mechanisms to promote degradation of nuclear viral cDNA in cells that are already productively infected in order to suppress immune sensing and proviral hyper-integration (superinfection). Manipulates PML-NBs and modulates SUMOylation of host BLM protein thereby enhancing its DNA-end processing activity toward viral unintegrated linear DNA. Also inhibits RAD52-mediated homologous repair of viral cDNA, preventing the generation of dead-end circular forms of single copies of the long terminal repeat and permitting sustained nucleolytic attack. The protein is Protein Vpu of Human immunodeficiency virus type 1 group M subtype B (isolate HXB2) (HIV-1).